We begin with the raw amino-acid sequence, 320 residues long: Putative movement protein (320 aa).

Residues H144, D171, and S199 contribute to the active site. The segment at 251-320 is disordered; the sequence is RRSRSISAKR…GKGNSDGSSP (70 aa). The segment covering 278 to 289 has biased composition (basic and acidic residues); that stretch reads RIERFGKDEFGR.

This sequence belongs to the tobamoviruses movement protein family.

Its function is as follows. May play a role in viral cell to cell movement by increasing the size exclusion limit of plasmodesmata and forming a complex with viral RNA to assist its movement. May also have a papain-like protease activity and cleave the genome polyprotein. The chain is Putative movement protein from Malus sylvestris (European crab apple).